The chain runs to 602 residues: SAGA complex subunit SPT8 (602 aa).

The interval 1–141 (MDEVDDILIN…REASSSTHEA (141 aa)) is disordered. Acidic residues-rich tracts occupy residues 14-23 (VDDEEDDEEM) and 36-75 (EGND…DGED). T85 is modified (phosphothreonine). 3 positions are modified to phosphoserine: S108, S123, and S131. WD repeat units lie at residues 173–212 (PIQT…EGKL) and 305–346 (GHTQ…NEFK). Positions 366-418 (VSGNVNSGKENENADDDMDSLFGDEDEDEKQDAGNEPVETGDGSNGEENKEQI) are disordered. The span at 378 to 395 (NADDDMDSLFGDEDEDEK) shows a compositional bias: acidic residues. WD repeat units follow at residues 415 to 454 (KEQI…SPAL), 506 to 544 (SISG…DASN), and 560 to 600 (HHGG…YDID). S451 carries the post-translational modification Phosphoserine.

This sequence belongs to the WD repeat SPT8 family. In terms of assembly, component of the 1.8 MDa SAGA (Spt-Ada-Gcn5 acetyltransferase) complex, which is composed of 19 subunits TRA1, SPT7, TAF5, NGG1/ADA3, SGF73, SPT20/ADA5, SPT8, TAF12, TAF6, HFI1/ADA1, UBP8, GCN5, ADA2, SPT3, SGF29, TAF10, TAF9, SGF11 and SUS1. The SAGA complex is composed of 4 modules, namely the HAT (histone acetyltransferase) module (GCN5, ADA2, NGG1/ADA3 and SGF29), the DUB (deubiquitinating) module (UBP8, SGF11, SGF73 and SUS1), the core or TAF (TBP-associated factor) module (TAF5, TAF6, TAF9, TAF10 and TAF12), and the Tra1 or SPT (Suppressor of Ty) module (TRA1, HFI1/ADA1, SPT3, SPT7, SPT8 and SPT20/ADA5). The Tra1/SPT module binds activators, the core module recruits TBP (TATA-binding protein), the HAT module contains the histone H3 acetyltransferase GCN5, and the DUB module comprises the histone H2B deubiquitinase UBP8.

Its subcellular location is the nucleus. Functionally, component of the transcription coactivator SAGA complex. SAGA acts as a general cofactor required for essentially all RNA polymerase II transcription. At the promoters, SAGA is required for transcription pre-initiation complex (PIC) recruitment. It influences RNA polymerase II transcriptional activity through different activities such as TBP interaction (via core/TAF module) and promoter selectivity, interaction with transcription activators (via Tra1/SPT module), and chromatin modification through histone acetylation (via HAT module) and deubiquitination (via DUB module). SAGA preferentially acetylates histones H3 (to form H3K9ac, H3K14ac, H3K18ac and H3K23ac) and H2B and deubiquitinates histone H2B. SAGA interacts with DNA via upstream activating sequences (UASs). During SAGA-mediated transcriptional inhibition, SPT3 and SPT8 prevent binding of TBP to the TATA box. The sequence is that of SAGA complex subunit SPT8 (SPT8) from Saccharomyces cerevisiae (strain ATCC 204508 / S288c) (Baker's yeast).